A 149-amino-acid polypeptide reads, in one-letter code: Transcriptional repressor NrdR (149 aa).

The segment at 3–34 (CPFCSTEETKVIDSRLVSDGYQVRRRRECTKC) is a zinc-finger region. Residues 49–139 (PKIIKNNGMR…VYLSFENINE (91 aa)) form the ATP-cone domain.

The protein belongs to the NrdR family. It depends on Zn(2+) as a cofactor.

Its function is as follows. Negatively regulates transcription of bacterial ribonucleotide reductase nrd genes and operons by binding to NrdR-boxes. This is Transcriptional repressor NrdR from Mannheimia succiniciproducens (strain KCTC 0769BP / MBEL55E).